Here is a 464-residue protein sequence, read N- to C-terminus: E3 ubiquitin-protein ligase TRAIP (464 aa).

The segment at 7–50 (CTICSDFFDNARDVAAITCGHTFHQECLLQWFHSAPHRTCPQCR) adopts an RING-type; atypical zinc-finger fold. Coiled coils occupy residues 142-186 (LDKQ…MIRD) and 236-277 (AQKA…LQKT). Positions 439-464 (KRKKVSRPTACTSSLANQPRLEDFLK) are disordered. The PIP-box signature appears at 456–464 (QPRLEDFLK).

It belongs to the TRAIP family.

The protein localises to the nucleus. Its subcellular location is the nucleoplasm. It localises to the nucleolus. It is found in the chromosome. The protein resides in the cytoplasm. The catalysed reaction is S-ubiquitinyl-[E2 ubiquitin-conjugating enzyme]-L-cysteine + [acceptor protein]-L-lysine = [E2 ubiquitin-conjugating enzyme]-L-cysteine + N(6)-ubiquitinyl-[acceptor protein]-L-lysine.. It functions in the pathway protein modification; protein ubiquitination. Its function is as follows. E3 ubiquitin ligase required to protect genome stability in response to replication stress. Acts as a key regulator of interstrand cross-link repair, which takes place when both strands of duplex DNA are covalently tethered together, thereby blocking replication and transcription. Controls the choice between the two pathways of replication-coupled interstrand-cross-link repair by mediating ubiquitination of mcm7 subunit of the CMG helicase complex. Short ubiquitin chains on mcm7 promote recruitment of DNA glycosylase neil3. If the interstrand cross-link cannot be cleaved by neil3, the ubiquitin chains continue to grow on mcm7, promoting the unloading of the CMG helicase complex by the vcp/p97 ATPase, enabling the Fanconi anemia DNA repair pathway. Only catalyzes ubiquitination of mcm7 when forks converge. Also involved in the repair of covalent DNA-protein cross-links (DPCs) during DNA synthesis: promotes ubiquitination of DPCs, leading to their degradation by the proteasome. Also acts as a negative regulator of innate immune signaling by inhibiting activation of NF-kappa-B mediated by TNF. In Xenopus laevis (African clawed frog), this protein is E3 ubiquitin-protein ligase TRAIP.